A 287-amino-acid chain; its full sequence is Co-chaperone protein DjlA (287 aa).

The Periplasmic portion of the chain corresponds to 1–6 (MNFIGK). A helical transmembrane segment spans residues 7–30 (FLGLIIGWKLGGFFGAICGVILGH). At 31-287 (LGDKKLYELG…DLICKTKGWK (257 aa)) the chain is on the cytoplasmic side. Residues 221–287 (DAYKVLGVSA…DLICKTKGWK (67 aa)) form the J domain.

Homodimer.

Its subcellular location is the cell inner membrane. In terms of biological role, regulatory DnaK co-chaperone. Direct interaction between DnaK and DjlA is needed for the induction of the wcaABCDE operon, involved in the synthesis of a colanic acid polysaccharide capsule, possibly through activation of the RcsB/RcsC phosphotransfer signaling pathway. The colanic acid capsule may help the bacterium survive conditions outside the host. This chain is Co-chaperone protein DjlA, found in Pasteurella multocida (strain Pm70).